The chain runs to 281 residues: Aliphatic sulfonates import ATP-binding protein SsuB (281 aa).

Residues 40-263 (LDIRGLRKSF…QRGSAELAAL (224 aa)) form the ABC transporter domain. 72–79 (GRSGCGKS) lines the ATP pocket.

Belongs to the ABC transporter superfamily. Aliphatic sulfonates importer (TC 3.A.1.17.2) family. As to quaternary structure, the complex is composed of two ATP-binding proteins (SsuB), two transmembrane proteins (SsuC) and a solute-binding protein (SsuA).

The protein resides in the cell inner membrane. The enzyme catalyses ATP + H2O + aliphatic sulfonate-[sulfonate-binding protein]Side 1 = ADP + phosphate + aliphatic sulfonateSide 2 + [sulfonate-binding protein]Side 1.. Part of the ABC transporter complex SsuABC involved in aliphatic sulfonates import. Responsible for energy coupling to the transport system. The polypeptide is Aliphatic sulfonates import ATP-binding protein SsuB (Rhodopseudomonas palustris (strain ATCC BAA-98 / CGA009)).